The following is a 945-amino-acid chain: Cysteine-rich, acidic integral membrane protein (945 aa).

The disordered stretch occupies residues 1–20 (MGNEAGPIFEESNAEVGTPP). The signal sequence occupies residues 1 to 23 (MGNEAGPIFEESNAEVGTPPADA). The Extracellular segment spans residues 24 to 882 (VHDDFFFDYK…GKGSSVSAGL (859 aa)). Asn34 and Asn43 each carry an N-linked (GlcNAc...) asparagine glycan. 66 repeat units span residues 40–51 (DDCNITGDCNET), 52–63 (DDCDITGDCNET), 64–75 (DDCNITGDCNET), 76–87 (DDCNITGDCNET), 88–99 (DDCNITGDCNET), 100–111 (DDCNITGDCNET), 112–123 (DDCDITGDCNET), 124–135 (DDCNITGDCNET), 136–147 (DDCNITGDCNET), 148–159 (DDCNITGDCNET), 160–171 (DDCDITGDCNET), 172–183 (DDCNITGDCNET), 184–195 (DDCDITGDCNET), 196–207 (DDCNITGDCNET), 208–219 (DDCNITGDCNET), 220–231 (DDCNITGDCNET), 232–243 (DDCNITGDCNET), 244–255 (DDCNITGDCNET), 256–267 (DDCNITGDCNET), 268–279 (DDCDITGDCNET), 280–291 (DDCNITGDCNET), 292–303 (DDCNITGDCNET), 304–315 (DDCNITGDCNET), 316–327 (DDCNITGDCNET), 328–339 (DDCNITGDCNET), 340–351 (DDCNITGDCNET), 352–363 (DDCDITGDCNET), 364–375 (DDCNITGDCNET), 376–387 (DDCNITGDCNET), 388–399 (DDCNITGDCNET), 400–411 (DDCNITGDCNET), 412–423 (DDCNITGDCNET), 424–435 (DDCDITGDCNET), 436–447 (DDCNITGDCNET), 448–459 (DDCDITGDCNET), 460–471 (DDCNITGDCNET), 472–483 (DDCNITGDCNET), 484–495 (DDCNITGDCNET), 496–507 (DDCNITGDCNET), 508–519 (DDCNITGDCNET), 520–531 (DDCNITGDCNET), 532–543 (DDCDITGDCNET), 544–555 (DDCNITGDCNET), 556–567 (DDCNITGDCNET), 568–579 (DDCNITGDCNET), 580–591 (DDCNITGDCNET), 592–603 (DDCNITGDCNET), 604–615 (DDCDITGDCNET), 616–627 (DDCNITGDCNET), 628–639 (DDCDITGDCNET), 640–651 (DDCNITGDCNET), 652–663 (DDCNITGDCNET), 664–675 (DDCNITGDCNET), 676–687 (DDCNITGDCNET), 688–699 (DDCNITGDCNET), 700–711 (DDCNITGDCNET), 712–723 (DDCDITGDCNET), 724–735 (DDCNITGDCNET), 736–747 (DDCNITGDCNET), 748–759 (DDCNITGDCNET), 760–771 (DDCNITGDCNET), 772–783 (DDCNITGDCNET), 784–795 (DDCDITGDCNET), 796–807 (DDCNITGDCNET), 808–819 (DDCDITGDCNET), and 820–831 (DDCNITGDCNET). Positions 40-831 (DDCNITGDCN…CNITGDCNET (792 aa)) are 66 X 12 AA tandem repeats of D-D-C-[ND]-I-T-G-D-G-N-E-T. N-linked (GlcNAc...) asparagine glycosylation is found at Asn67, Asn79, Asn91, and Asn103. N-linked (GlcNAc...) asparagine glycans are attached at residues Asn127, Asn139, and Asn151. Asn175 is a glycosylation site (N-linked (GlcNAc...) asparagine). 6 N-linked (GlcNAc...) asparagine glycosylation sites follow: Asn199, Asn211, Asn223, Asn235, Asn247, and Asn259. 6 N-linked (GlcNAc...) asparagine glycosylation sites follow: Asn283, Asn295, Asn307, Asn319, Asn331, and Asn343. Asn367, Asn379, Asn391, Asn403, and Asn415 each carry an N-linked (GlcNAc...) asparagine glycan. An N-linked (GlcNAc...) asparagine glycan is attached at Asn439. N-linked (GlcNAc...) asparagine glycans are attached at residues Asn463, Asn475, Asn487, Asn499, Asn511, and Asn523. N-linked (GlcNAc...) asparagine glycosylation is found at Asn547, Asn559, Asn571, Asn583, and Asn595. The N-linked (GlcNAc...) asparagine glycan is linked to Asn619. N-linked (GlcNAc...) asparagine glycosylation is found at Asn643, Asn655, Asn667, Asn679, Asn691, and Asn703. N-linked (GlcNAc...) asparagine glycosylation is found at Asn727, Asn739, Asn751, Asn763, and Asn775. Asn799 is a glycosylation site (N-linked (GlcNAc...) asparagine). Asn823 carries an N-linked (GlcNAc...) asparagine glycan. The helical transmembrane segment at 883–903 (LLLAGSTFLVLAVGLSAVLFL) threads the bilayer. At 904-945 (GRERQNAVVICDNEVMMEEVPGCLSDASFAVPVTQSSDEARP) the chain is on the cytoplasmic side.

Its subcellular location is the flagellar pocket. It localises to the cell membrane. Functionally, supposed to function as cell surface receptor. Possibly involved in receptor-mediated endocytosis. This chain is Cysteine-rich, acidic integral membrane protein (CRAM), found in Trypanosoma brucei brucei.